The chain runs to 361 residues: tRNA N6-adenosine threonylcarbamoyltransferase (361 aa).

The Fe cation site is built by histidine 110 and histidine 114. Substrate contacts are provided by residues 132 to 136 (LVSGG), aspartate 165, glycine 178, aspartate 182, and asparagine 289. Aspartate 317 is a Fe cation binding site.

This sequence belongs to the KAE1 / TsaD family. Fe(2+) serves as cofactor.

The protein localises to the cytoplasm. It carries out the reaction L-threonylcarbamoyladenylate + adenosine(37) in tRNA = N(6)-L-threonylcarbamoyladenosine(37) in tRNA + AMP + H(+). Its function is as follows. Required for the formation of a threonylcarbamoyl group on adenosine at position 37 (t(6)A37) in tRNAs that read codons beginning with adenine. Is involved in the transfer of the threonylcarbamoyl moiety of threonylcarbamoyl-AMP (TC-AMP) to the N6 group of A37, together with TsaE and TsaB. TsaD likely plays a direct catalytic role in this reaction. This chain is tRNA N6-adenosine threonylcarbamoyltransferase, found in Nitratidesulfovibrio vulgaris (strain ATCC 29579 / DSM 644 / CCUG 34227 / NCIMB 8303 / VKM B-1760 / Hildenborough) (Desulfovibrio vulgaris).